Reading from the N-terminus, the 149-residue chain is Large ribosomal subunit protein uL13 (149 aa).

Belongs to the universal ribosomal protein uL13 family. In terms of assembly, part of the 50S ribosomal subunit.

Its function is as follows. This protein is one of the early assembly proteins of the 50S ribosomal subunit, although it is not seen to bind rRNA by itself. It is important during the early stages of 50S assembly. The chain is Large ribosomal subunit protein uL13 from Prosthecochloris aestuarii (strain DSM 271 / SK 413).